The following is a 703-amino-acid chain: Arf-GAP with GTPase, ANK repeat and PH domain-containing protein 9 (703 aa).

Disordered regions lie at residues 249-287 (KRNG…TPTP), 299-323 (FTSE…TIGS), and 427-449 (SSTT…KHLK). The segment covering 271–286 (QEDPQFSVPPTANTPT) has biased composition (polar residues). Residues 303–318 (KGSDPDKERKAPENHA) show a composition bias toward basic and acidic residues. The PH domain maps to 327 to 488 (IPIKQGMLLK…WVQAIQSQIL (162 aa)). One can recognise an Arf-GAP domain in the interval 509 to 629 (AMALQSIQNM…LFLAPLPCTE (121 aa)). Residues 524–547 (CVDCETQNPKWASLNLGVLMCIEC) form a C4-type zinc finger. One copy of the ANK repeat lies at 631–700 (SLGQQLLRAT…WTSWPEMPTG (70 aa)).

It belongs to the centaurin gamma-like family.

Functionally, putative GTPase-activating protein. The polypeptide is Arf-GAP with GTPase, ANK repeat and PH domain-containing protein 9 (AGAP9) (Homo sapiens (Human)).